A 97-amino-acid chain; its full sequence is Large ribosomal subunit protein bL25 (97 aa).

The protein belongs to the bacterial ribosomal protein bL25 family. In terms of assembly, part of the 50S ribosomal subunit; part of the 5S rRNA/L5/L18/L25 subcomplex. Contacts the 5S rRNA. Binds to the 5S rRNA independently of L5 and L18.

In terms of biological role, this is one of the proteins that binds to the 5S RNA in the ribosome where it forms part of the central protuberance. In Blochmanniella pennsylvanica (strain BPEN), this protein is Large ribosomal subunit protein bL25.